Reading from the N-terminus, the 424-residue chain is Deoxyguanosinetriphosphate triphosphohydrolase-like protein (424 aa).

Over residues 1–10 (MEGTAPPTPY) the composition is skewed to pro residues. The tract at residues 1 to 31 (MEGTAPPTPYDPASVARYAPEPDKRPGRTAF) is disordered. The segment covering 20–31 (PEPDKRPGRTAF) has biased composition (basic and acidic residues). Residues 70 to 220 (RLTHSLECAQ…MDWADDVAYS (151 aa)) enclose the HD domain.

This sequence belongs to the dGTPase family. Type 2 subfamily.

In Streptomyces coelicolor (strain ATCC BAA-471 / A3(2) / M145), this protein is Deoxyguanosinetriphosphate triphosphohydrolase-like protein.